An 87-amino-acid polypeptide reads, in one-letter code: Retinal rod rhodopsin-sensitive cGMP 3',5'-cyclic phosphodiesterase subunit gamma (87 aa).

Residue Met1 is modified to N-acetylmethionine. Basic and acidic residues predominate over residues 1 to 12 (MNLEPPKGEIRS). The interval 1–55 (MNLEPPKGEIRSATRVIGGPVTPRKGPPKFKQRQTRQFKSKPPKKGVQGFGDDIP) is disordered. Residues 26-44 (GPPKFKQRQTRQFKSKPPK) are compositionally biased toward basic residues.

The protein belongs to the rod/cone cGMP-PDE gamma subunit family. Oligomer composed of two catalytic chains (alpha and beta), an inhibitory chain (gamma) and the delta chain.

It carries out the reaction 3',5'-cyclic GMP + H2O = GMP + H(+). In terms of biological role, participates in processes of transmission and amplification of the visual signal. cGMP-PDEs are the effector molecules in G-protein-mediated phototransduction in vertebrate rods and cones. The chain is Retinal rod rhodopsin-sensitive cGMP 3',5'-cyclic phosphodiesterase subunit gamma (Pde6g) from Mus musculus (Mouse).